The chain runs to 495 residues: MGSHAPAVAGKPDPKKGPYQATPWNIQLSATDTPGFTHVGNLERRSADRASDLVMNNHSKFHTFHDEIVGFHNHISHHVLTLWALGATPDEMQAAYDFNKPFQLLTYYNDPSVNIKLRDPEFFRQGLGNFELYGDYVRFFQAEVAAKGTQTVLHDYLFKGDTLTEDLLARLFSGFLHPLINLGFALEFQQPFLAAECLASTCMHPPYPAEFLTATEQHVECNGRPRSLPILSIAEGMRLDPVVATAVGPEDGNNRIADALLKRALKELIPHLSYFQVEPTEHDLARKTAEILQASAYICGAAQHPRKVEALDFVMLHSLTAAVFFPTIIKQEWISIETRARLLEWKGRSDLITYAALGCPKLYPDRITGYQPKQAATGWSDVVQRARVYQDDGHACKVIRALMCAENVCQPFEGEEGFPLKKADFLTVAHMTMDSVERMSDPNWVRQTEKVKQMSAQGRGQHSQVSAIMLRWVRWCGTEGAWDDFPDLEELSPSA.

Residues 1-22 (MGSHAPAVAGKPDPKKGPYQAT) form a disordered region.

Belongs to the questin oxidase family.

The protein operates within mycotoxin biosynthesis; aflatoxin biosynthesis. Functionally, oxidoreductase; part of the gene cluster that mediates the biosynthesis of aflatoxins, a group of polyketide-derived furanocoumarins, and part of the most toxic and carcinogenic compounds among the known mycotoxins. The four major aflatoxins produced by A.parasiticus are aflatoxin B1 (AFB1), aflatoxin B2 (AFB2), aflatoxin G1 (AFG1) and aflatoxin G2 (AFG2). Within the aflatoxin pathway, the oxidoreductase aflY seems to be involved in the conversion of versicolorin A (VERA) to demethylsterigmatocystin (DMST), through probable Baeyer-Villiger oxidation required for the formation of the xanthone ring. The biosynthesis of aflatoxins begins with the norsolorinic acid synthase aflC that combines a hexanoyl starter unit produced by the fatty acid synthase aflA/aflB and 7 malonyl-CoA extender units to synthesize the precursor NOR. The second step is the conversion of NOR to averantin and requires the norsolorinic acid ketoreductase aflD, which catalyzes the dehydration of norsolorinic acid to form (1'S)-averantin. The norsolorinic acid reductases aflE and aflF may also play a role in the conversion of NOR to AVN. The cytochrome P450 monooxygenase aflG then catalyzes the hydroxylation of AVN to 5'hydroxyaverantin (HAVN). The next step is performed by the 5'-hydroxyaverantin dehydrogenase aflH that transforms HAVN to 5'-oxoaverantin (OAVN) which is further converted to averufin (AVF) by aflK that plays a dual role in the pathway, as a 5'-oxoaverantin cyclase that mediates conversion of 5'-oxoaverantin, as well as a versicolorin B synthase in a later step in the pathway. The averufin oxidase aflI catalyzes the conversion of AVF to versiconal hemiacetal acetate (VHA). VHA is then the substrate for the versiconal hemiacetal acetate esterase aflJ to yield versiconal (VAL). Versicolorin B synthase aflK then converts VAL to versicolorin B (VERB) by closing the bisfuran ring of aflatoxin which is required for DNA-binding, thus giving to aflatoxin its activity as a mutagen. Then, the activity of the versicolorin B desaturase aflL leads to versicolorin A (VERA). A branch point starts from VERB since it can also be converted to dihydrodemethylsterigmatocystin (DMDHST), probably also by aflL, VERA being a precursor for aflatoxins B1 and G1, and DMDHST for aflatoxins B2 and G2. Next, the versicolorin reductase aflM and the cytochrome P450 monooxygenase aflN are involved in conversion of VERA to demethylsterigmatocystin (DMST). AflX and aflY seem also involved in this step, through probable aflX-mediated epoxide ring-opening step following versicolorin A oxidation and aflY-mediated Baeyer-Villiger oxidation required for the formation of the xanthone ring. The methyltransferase aflO then leads to the modification of DMST to sterigmatocystin (ST), and of DMDHST to dihydrosterigmatocystin (DHST). Both ST and DHST are then substrates of the O-methyltransferase aflP to yield O-methylsterigmatocystin (OMST) and dihydro-O-methylsterigmatocystin (DHOMST), respectively. Finally OMST is converted to aflatoxins B1 and G1, and DHOMST to aflatoxins B2 and G2, via the action of several enzymes including O-methylsterigmatocystin oxidoreductase aflQ, the cytochrome P450 monooxygenase aflU, but also the NADH-dependent flavin oxidoreductase nadA which is specifically required for the synthesis of AFG1. The protein is Oxidoreductase AflY of Aspergillus parasiticus (strain ATCC 56775 / NRRL 5862 / SRRC 143 / SU-1).